A 1009-amino-acid polypeptide reads, in one-letter code: Rho-type GTPase-activating protein 2 (1009 aa).

2 LIM zinc-binding domains span residues Ser11 to Asp68 and Lys69 to Lys129. The span at Lys143–Val155 shows a compositional bias: basic and acidic residues. 5 disordered regions span residues Lys143–Ser228, Thr358–Ser433, Thr449–Asp608, Thr664–Lys709, and Gln723–Pro780. Residues Thr162 to Val196 show a composition bias toward polar residues. Residues Asp212–Ser222 show a composition bias toward basic and acidic residues. Composition is skewed to polar residues over residues Lys363–Thr385 and Leu399–Asp414. The span at Asn481–Pro491 shows a compositional bias: basic residues. 2 stretches are compositionally biased toward polar residues: residues Ser493–Asn510 and Gln522–Gly553. Basic and acidic residues predominate over residues Thr664–Glu682. Composition is skewed to polar residues over residues Asn683–Ser707 and Glu728–Ile749. Phosphoserine is present on Ser763. In terms of domain architecture, Rho-GAP spans Ser788–Phe1006.

In terms of biological role, GTPase-activating protein (GAP) for CDC42 and/or RHO1. This is Rho-type GTPase-activating protein 2 (RGA2) from Saccharomyces cerevisiae (strain ATCC 204508 / S288c) (Baker's yeast).